The chain runs to 115 residues: uncharacterized protein (115 aa).

This is an uncharacterized protein from Acidianus convivator (ATV).